Reading from the N-terminus, the 90-residue chain is Protein RALF-like 29 (90 aa).

The first 25 residues, 1–25 (MIKTKEVTFVTILIVLCVFISTIHA), serve as a signal peptide directing secretion. 2 disulfide bridges follow: Cys-41-Cys-50 and Cys-63-Cys-69.

This sequence belongs to the plant rapid alkalinization factor (RALF) family.

The protein localises to the secreted. In terms of biological role, cell signaling peptide that may regulate plant stress, growth, and development. Mediates a rapid alkalinization of extracellular space by mediating a transient increase in the cytoplasmic Ca(2+) concentration leading to a calcium-dependent signaling events through a cell surface receptor and a concomitant activation of some intracellular mitogen-activated protein kinases. This chain is Protein RALF-like 29 (RALFL29), found in Arabidopsis thaliana (Mouse-ear cress).